The chain runs to 340 residues: Glycerol-3-phosphate dehydrogenase [NAD(P)+] (340 aa).

3 residues coordinate NADPH: S13, W14, and K108. Sn-glycerol 3-phosphate-binding residues include K108, G139, and S141. A143 is an NADPH binding site. 5 residues coordinate sn-glycerol 3-phosphate: K194, D247, S257, R258, and N259. Catalysis depends on K194, which acts as the Proton acceptor. R258 serves as a coordination point for NADPH. NADPH contacts are provided by V282 and E284.

It belongs to the NAD-dependent glycerol-3-phosphate dehydrogenase family.

The protein localises to the cytoplasm. It carries out the reaction sn-glycerol 3-phosphate + NAD(+) = dihydroxyacetone phosphate + NADH + H(+). The enzyme catalyses sn-glycerol 3-phosphate + NADP(+) = dihydroxyacetone phosphate + NADPH + H(+). It functions in the pathway membrane lipid metabolism; glycerophospholipid metabolism. Catalyzes the reduction of the glycolytic intermediate dihydroxyacetone phosphate (DHAP) to sn-glycerol 3-phosphate (G3P), the key precursor for phospholipid synthesis. In Streptococcus sanguinis (strain SK36), this protein is Glycerol-3-phosphate dehydrogenase [NAD(P)+].